The primary structure comprises 456 residues: Senecionine N-oxygenase (456 aa).

Positions 1–22 (MFRKFVIMLVLSLLVAAGISQA) are cleaved as a signal peptide. An FAD-binding site is contributed by 32–37 (GAGYSG). 215–220 (GAGPSG) contributes to the NADP(+) binding site.

This sequence belongs to the FMO family. Homotetramer. The cofactor is FAD. Hemolymph.

Its subcellular location is the secreted. The enzyme catalyses senecionine + NADPH + O2 = senecionine N-oxide + NADP(+) + H2O. Its function is as follows. NADPH-dependent monooxygenase that detoxifies senecionine and similar plant alkaloids that are ingested by the larvae. Is active towards a narrow range of related substrates with highest activity towards senecionine, followed by seneciphylline, retrorsine, monocrotaline, senecivernine, axillarine and axillaridine. In Tyria jacobaeae (Cinnabar moth), this protein is Senecionine N-oxygenase (sno1).